The chain runs to 269 residues: Meiotic drive suppressor wtf5 (269 aa).

Positions 1–65 are disordered; the sequence is MKNNYTSLKS…NTHRENHSYG (65 aa). Over residues 19–30 the composition is skewed to basic and acidic residues; sequence KTDHEIDLEKGP. The next 3 helical transmembrane spans lie at 73–95, 110–132, and 206–228; these read LLIILLISFTSIILFNAPEVCYL, WTLFGFWCLVCTLALIFLTYFYE, and WGLKCSLADHIIFVVLSILVFIA.

This sequence belongs to the WTF family. As to quaternary structure, homomer. Interacts with other proteins that exhibit high sequence similarity.

Its subcellular location is the spore membrane. The protein localises to the vacuole membrane. Acts as a suppressor component of the dual wtf meiotic drive system, and can suppress but not confer meiotic drive by compatible poisons. Wtf meiotic drive systems promote unequal transmission of alleles from the parental zygote to progeny spores by encoding a poison and an antidote from the same locus; the poison is trans-acting and forms toxic aggregates in all spores within an ascus, wherease the antidote is spore-specific and targets aggregates for degradation by the vacuole. Meiotic drive by wtf systems therefore lead to poisoning of all progeny that do not inherit the dual poison/antidote allele, or express a compatible antidote. The chain is Meiotic drive suppressor wtf5 from Schizosaccharomyces pombe (strain 972 / ATCC 24843) (Fission yeast).